A 480-amino-acid polypeptide reads, in one-letter code: Islet cell autoantigen 1 (480 aa).

Residues 50–253 enclose the AH domain; it reads ASDADLDAKL…TSHTMAAIHE (204 aa). 2 stretches are compositionally biased toward basic and acidic residues: residues 276 to 293 and 306 to 321; these read LVEK…REAV and ENQH…EEGK. 2 disordered regions span residues 276–338 and 400–421; these read LVEK…ACSG and LKEP…IGSA.

The protein localises to the cytoplasm. Its subcellular location is the cytosol. It localises to the golgi apparatus membrane. The protein resides in the cytoplasmic vesicle. It is found in the secretory vesicle membrane. The protein localises to the secretory vesicle. Its subcellular location is the synaptic vesicle membrane. Functionally, may play a role in neurotransmitter secretion. The sequence is that of Islet cell autoantigen 1 from Rattus norvegicus (Rat).